The sequence spans 117 residues: Putative membrane protein insertion efficiency factor (117 aa).

The protein belongs to the UPF0161 family.

It localises to the cell inner membrane. Its function is as follows. Could be involved in insertion of integral membrane proteins into the membrane. The protein is Putative membrane protein insertion efficiency factor of Bartonella henselae (strain ATCC 49882 / DSM 28221 / CCUG 30454 / Houston 1) (Rochalimaea henselae).